A 254-amino-acid polypeptide reads, in one-letter code: MTQVGQYIISNNSTSNLILHITKKLVSGESLFNLKQEEILIIQNVCTLMFSHGIQILLLRETLHNIGVSDLVVLNRKVPDEFWFKIFCMIKQRSGSEILKHIFSEENAAQLSKKLHHTGIVKQIIESFFLDEFGLSITIPAEIIHDGNIMFSIGAIYNHRLLKLCRYFNKFWGQEVYEPFIRKICKHLWFGYLIFFDKIKISHGAFSQQKPEHRNGLFTFIQNDFKVFCGIVEKEAKVTECNLSDLFSIGPLQF.

It belongs to the herpesviridae UL79 family.

This chain is Protein U52 (U52), found in Homo sapiens (Human).